A 420-amino-acid polypeptide reads, in one-letter code: MRKVLALILAGGHGKRLGVLTEKIAKPAVPFGGKYRLIDFTLSNCVNSGIYHVGVLTQYRPHLLNNHINIGRPWDLDRKKGGVTILPPYLGGVAGWYRGTANAVYQNIEYVDSADPDFVLILSGDHVYAMDYNDIIDFHILKGAEGTIACIEVPPEETNRFGIMMTDLDSRIVDFEEKPQRARSNLASLGIYVFNWKFLKEYLIRDEQNNESTHDFGHDIIPLMINEGCQIYAFKFNGYWRDVGTVRSYWESNLELTRPIPPLNLYDRHWRFFTQTEEMPPAYCAPTSKIVNSIISEGCEIYGFVENSVIFQGVYIGENAVVKNSVVMTSTKIGENCVITDAVIAERVIVENRVIIGEGDDAKNKLDSDVYTGQITVIGMYSVIPSGSVIGKNCVVGVGVEKGDFKTQKVESGDYILHKE.

Alpha-D-glucose 1-phosphate-binding positions include Tyr97, Gly162, 177–178 (EK), and Ser188.

Belongs to the bacterial/plant glucose-1-phosphate adenylyltransferase family. In terms of assembly, homotetramer.

The enzyme catalyses alpha-D-glucose 1-phosphate + ATP + H(+) = ADP-alpha-D-glucose + diphosphate. Its pathway is glycan biosynthesis; glycogen biosynthesis. Functionally, involved in the biosynthesis of ADP-glucose, a building block required for the elongation reactions to produce glycogen. Catalyzes the reaction between ATP and alpha-D-glucose 1-phosphate (G1P) to produce pyrophosphate and ADP-Glc. The protein is Glucose-1-phosphate adenylyltransferase of Pseudothermotoga lettingae (strain ATCC BAA-301 / DSM 14385 / NBRC 107922 / TMO) (Thermotoga lettingae).